We begin with the raw amino-acid sequence, 86 residues long: Late effector protein 1 (86 aa).

An N-terminal signal peptide occupies residues 1 to 24 (MRSHQMAAFFAVSLMMMVVLGALS).

The protein belongs to the lep1 family. As to quaternary structure, interacts at the cell wall with secreted rep1 repellent peptides.

It localises to the secreted. The protein localises to the cell wall. Functionally, core effector contributing to spore formation and tumor formation at the host plant. Modulates surface hydrophobicity promoting cell-cell or cell-surface contacts. Lep1 and rep1 interact in aerial hyphae to form a strong hydrophobic layer. Plays a crucial role in hyphal aggregation that might be a prerequisite for strong proliferation of diploid cells and for induction of the morphological changes associated with spore formation. The polypeptide is Late effector protein 1 (Mycosarcoma maydis (Corn smut fungus)).